The following is a 185-amino-acid chain: Elongation factor P 1 (185 aa).

The protein belongs to the elongation factor P family.

It is found in the cytoplasm. It participates in protein biosynthesis; polypeptide chain elongation. Functionally, involved in peptide bond synthesis. Stimulates efficient translation and peptide-bond synthesis on native or reconstituted 70S ribosomes in vitro. Probably functions indirectly by altering the affinity of the ribosome for aminoacyl-tRNA, thus increasing their reactivity as acceptors for peptidyl transferase. The chain is Elongation factor P 1 (efp1) from Chlamydia trachomatis serovar D (strain ATCC VR-885 / DSM 19411 / UW-3/Cx).